Reading from the N-terminus, the 205-residue chain is High frequency lysogenization protein HflD homolog (205 aa).

It belongs to the HflD family.

The protein localises to the cytoplasm. The protein resides in the cell inner membrane. This chain is High frequency lysogenization protein HflD homolog, found in Shewanella baltica (strain OS185).